The chain runs to 648 residues: Biosynthetic arginine decarboxylase (648 aa).

The residue at position 109 (K109) is an N6-(pyridoxal phosphate)lysine. 291–301 (LDVGGGLGVDY) contributes to the substrate binding site.

Belongs to the Orn/Lys/Arg decarboxylase class-II family. SpeA subfamily. It depends on Mg(2+) as a cofactor. The cofactor is pyridoxal 5'-phosphate.

It carries out the reaction L-arginine + H(+) = agmatine + CO2. Catalyzes the biosynthesis of agmatine from arginine. This Prochlorococcus marinus (strain MIT 9313) protein is Biosynthetic arginine decarboxylase.